Here is a 134-residue protein sequence, read N- to C-terminus: ATP synthase epsilon chain (134 aa).

This sequence belongs to the ATPase epsilon chain family. As to quaternary structure, F-type ATPases have 2 components, CF(1) - the catalytic core - and CF(0) - the membrane proton channel. CF(1) has five subunits: alpha(3), beta(3), gamma(1), delta(1), epsilon(1). CF(0) has three main subunits: a, b and c.

It is found in the cell inner membrane. Functionally, produces ATP from ADP in the presence of a proton gradient across the membrane. In Nitratidesulfovibrio vulgaris (strain DSM 19637 / Miyazaki F) (Desulfovibrio vulgaris), this protein is ATP synthase epsilon chain.